A 201-amino-acid chain; its full sequence is Dephospho-CoA kinase (201 aa).

The region spanning 3–201 is the DPCK domain; sequence ILGLTGGIGS…QIDSRVGCKI (199 aa). 11–16 provides a ligand contact to ATP; it reads GSGKSL.

Belongs to the CoaE family.

Its subcellular location is the cytoplasm. It carries out the reaction 3'-dephospho-CoA + ATP = ADP + CoA + H(+). The protein operates within cofactor biosynthesis; coenzyme A biosynthesis; CoA from (R)-pantothenate: step 5/5. In terms of biological role, catalyzes the phosphorylation of the 3'-hydroxyl group of dephosphocoenzyme A to form coenzyme A. The chain is Dephospho-CoA kinase from Ehrlichia ruminantium (strain Welgevonden).